A 278-amino-acid chain; its full sequence is 4-deoxy-L-threo-5-hexosulose-uronate ketol-isomerase (278 aa).

Residues His-196, His-198, Glu-203, and His-245 each contribute to the Zn(2+) site.

Belongs to the KduI family. In terms of assembly, homohexamer. Zn(2+) serves as cofactor.

The catalysed reaction is 5-dehydro-4-deoxy-D-glucuronate = 3-deoxy-D-glycero-2,5-hexodiulosonate. It functions in the pathway glycan metabolism; pectin degradation; 2-dehydro-3-deoxy-D-gluconate from pectin: step 4/5. Catalyzes the isomerization of 5-dehydro-4-deoxy-D-glucuronate to 3-deoxy-D-glycero-2,5-hexodiulosonate. The chain is 4-deoxy-L-threo-5-hexosulose-uronate ketol-isomerase from Escherichia coli O127:H6 (strain E2348/69 / EPEC).